A 152-amino-acid chain; its full sequence is MELTTRTIAARKHIALVSHDHCKKSLLEWVMQNRDLLSQHELYATGTTGNLVQKATGIDVHCLLSGPMGGDQEVGALISEKKIDILIFFWDPLNAVPHDPDVKALLRLATVWNIPVATNRSTADFLIDSALFSGEVTIAIPNYDRYLQQRLK.

In terms of domain architecture, MGS-like spans 1-152 (MELTTRTIAA…YDRYLQQRLK (152 aa)). Substrate-binding positions include His-19, Lys-23, 45–48 (TGTT), and 65–66 (SG). Asp-71 (proton donor/acceptor) is an active-site residue. His-98 contributes to the substrate binding site.

The protein belongs to the methylglyoxal synthase family.

It carries out the reaction dihydroxyacetone phosphate = methylglyoxal + phosphate. In terms of biological role, catalyzes the formation of methylglyoxal from dihydroxyacetone phosphate. The chain is Methylglyoxal synthase from Yersinia enterocolitica serotype O:8 / biotype 1B (strain NCTC 13174 / 8081).